A 206-amino-acid polypeptide reads, in one-letter code: Holliday junction branch migration complex subunit RuvA (206 aa).

Residues 1–64 (MIGRLSGTIL…EDAQLLYGFN (64 aa)) are domain I. The segment at 65–143 (KKSERELFRE…GWGEGDLFTP (79 aa)) is domain II. Positions 144–157 (ASDAAASNAEIQKY) are flexible linker. Residues 158-206 (SSARAEDEAVSALIALGYKALQAAKVVSQVVKPEMSSENIIREALRSMV) form a domain III region.

Belongs to the RuvA family. In terms of assembly, homotetramer. Forms an RuvA(8)-RuvB(12)-Holliday junction (HJ) complex. HJ DNA is sandwiched between 2 RuvA tetramers; dsDNA enters through RuvA and exits via RuvB. An RuvB hexamer assembles on each DNA strand where it exits the tetramer. Each RuvB hexamer is contacted by two RuvA subunits (via domain III) on 2 adjacent RuvB subunits; this complex drives branch migration. In the full resolvosome a probable DNA-RuvA(4)-RuvB(12)-RuvC(2) complex forms which resolves the HJ.

It is found in the cytoplasm. In terms of biological role, the RuvA-RuvB-RuvC complex processes Holliday junction (HJ) DNA during genetic recombination and DNA repair, while the RuvA-RuvB complex plays an important role in the rescue of blocked DNA replication forks via replication fork reversal (RFR). RuvA specifically binds to HJ cruciform DNA, conferring on it an open structure. The RuvB hexamer acts as an ATP-dependent pump, pulling dsDNA into and through the RuvAB complex. HJ branch migration allows RuvC to scan DNA until it finds its consensus sequence, where it cleaves and resolves the cruciform DNA. This is Holliday junction branch migration complex subunit RuvA from Photobacterium profundum (strain SS9).